A 73-amino-acid polypeptide reads, in one-letter code: SIFamide-related peptide (73 aa).

The signal sequence occupies residues 1–23 (MVSIRLTFALAIVAIIFAFSVDA). F35 carries the post-translational modification Phenylalanine amide. Positions 39-73 (SNTMTDYEFTSRALSAICEVASETCTAWMSRQESN) are excised as a propeptide.

As to expression, expressed in brain, the retrocerebral complex and in ventral, thoracic and abdominal ganglia (at protein level).

The protein localises to the secreted. This chain is SIFamide-related peptide, found in Camponotus floridanus (Florida carpenter ant).